The primary structure comprises 109 residues: Large ribosomal subunit protein uL24 (109 aa).

It belongs to the universal ribosomal protein uL24 family. As to quaternary structure, part of the 50S ribosomal subunit.

One of two assembly initiator proteins, it binds directly to the 5'-end of the 23S rRNA, where it nucleates assembly of the 50S subunit. In terms of biological role, one of the proteins that surrounds the polypeptide exit tunnel on the outside of the subunit. The protein is Large ribosomal subunit protein uL24 of Ehrlichia ruminantium (strain Gardel).